The sequence spans 723 residues: Epidermal growth factor receptor kinase substrate 8-like protein 1 (723 aa).

In terms of domain architecture, PTB spans 35 to 164 (QYPVNHLVTF…LHNYRSGRGE (130 aa)). Over residues 162 to 183 (RGERRAAALRATQEELQRDRSP) the composition is skewed to basic and acidic residues. 4 disordered regions span residues 162-247 (RGER…PRGP), 442-477 (KQLQ…LESE), 537-589 (GPRL…GLDP), and 609-636 (LAQG…GSDA). Ser-182 carries the post-translational modification Phosphoserine. Thr-187 bears the Phosphothreonine mark. One can recognise an SH3 domain in the interval 478-537 (TAGKWVLCNYDFQARNSSELSVKQRDVLEVLDDSRKWWKVRDPAGQEGYVPYNILTPYPG). Over residues 543-552 (SQSPARSLNS) the composition is skewed to polar residues. A compositionally biased stretch (pro residues) spans 553–568 (TPPPPPAPAPAPPPAL). Residues 571–580 (PRWDRPRWDS) show a composition bias toward basic and acidic residues. Positions 689 to 719 (VQRSLLEDKEKVSELEAVMEKQKKKVEGEVE) form a coiled coil.

Belongs to the EPS8 family. Interacts with ABI1. Part of a complex that contains SOS1, ABI1 and EPS8L2. Associates with F-actin. Detected in placenta.

The protein resides in the cytoplasm. In terms of biological role, stimulates guanine exchange activity of SOS1. May play a role in membrane ruffling and remodeling of the actin cytoskeleton. This Homo sapiens (Human) protein is Epidermal growth factor receptor kinase substrate 8-like protein 1 (EPS8L1).